Consider the following 325-residue polypeptide: Probable serine/threonine-protein phosphatase 2A activator 1 (325 aa).

The protein belongs to the PTPA-type PPIase family.

Its subcellular location is the cytoplasm. It catalyses the reaction [protein]-peptidylproline (omega=180) = [protein]-peptidylproline (omega=0). Its function is as follows. PPIases accelerate the folding of proteins. It catalyzes the cis-trans isomerization of proline imidic peptide bonds in oligopeptides. Acts as a regulatory subunit for PP2A-like phosphatases modulating their activity or substrate specificity, probably by inducing a conformational change in the catalytic subunit, a direct target of the PPIase. The sequence is that of Probable serine/threonine-protein phosphatase 2A activator 1 (ppp2r4A) from Dictyostelium discoideum (Social amoeba).